A 342-amino-acid polypeptide reads, in one-letter code: Ribosomal RNA small subunit methyltransferase C (342 aa).

The protein belongs to the methyltransferase superfamily. RsmC family. As to quaternary structure, monomer.

It is found in the cytoplasm. The catalysed reaction is guanosine(1207) in 16S rRNA + S-adenosyl-L-methionine = N(2)-methylguanosine(1207) in 16S rRNA + S-adenosyl-L-homocysteine + H(+). In terms of biological role, specifically methylates the guanine in position 1207 of 16S rRNA in the 30S particle. The chain is Ribosomal RNA small subunit methyltransferase C from Cronobacter sakazakii (strain ATCC BAA-894) (Enterobacter sakazakii).